The chain runs to 364 residues: MSGNSIGQNFVVTTFGESHGVALGCIIDGCPPGLELNEADMQHDLDRRRPGTSRYTTARREPDEVRVLSGIFEGKTTGTSIGLMIENTDQRSKDYSNIKDLFRPGHADYTYQQKYGLRDYRGGGRSSARETAMRVAAGAVAKKYLKQVHGIEINGFLSQLGPIKAEALDFSQIEQNAFFFPDPSKLDELDEYMRDLKKSGDSVGAKVSVVATGVPVGLGEPVFDRLDADIAHALMGINAVKGVEIGDGFEVVTQKGSEHRDLMSPEGFASNHAGGILGGISSGQPIVAHIAMKPTSSISIPGESITAQGEIAEVVTKGRHDPCVGIRAVPIAEAMLAIVLMDHLLRHRAQNMDVNSQTPTIGMR.

Residues R48 and R54 each coordinate NADP(+). Residues R125–S127, N238–A239, G278, K293–S297, and R319 contribute to the FMN site.

This sequence belongs to the chorismate synthase family. Homotetramer. It depends on FMNH2 as a cofactor.

The catalysed reaction is 5-O-(1-carboxyvinyl)-3-phosphoshikimate = chorismate + phosphate. It functions in the pathway metabolic intermediate biosynthesis; chorismate biosynthesis; chorismate from D-erythrose 4-phosphate and phosphoenolpyruvate: step 7/7. Functionally, catalyzes the anti-1,4-elimination of the C-3 phosphate and the C-6 proR hydrogen from 5-enolpyruvylshikimate-3-phosphate (EPSP) to yield chorismate, which is the branch point compound that serves as the starting substrate for the three terminal pathways of aromatic amino acid biosynthesis. This reaction introduces a second double bond into the aromatic ring system. This Shewanella woodyi (strain ATCC 51908 / MS32) protein is Chorismate synthase.